The primary structure comprises 202 residues: Small ribosomal subunit protein uS4 (202 aa).

The span at methionine 1–arginine 13 shows a compositional bias: basic residues. Residues methionine 1–arginine 42 form a disordered region. The S4 RNA-binding domain occupies asparagine 90–asparagine 152.

It belongs to the universal ribosomal protein uS4 family. Part of the 30S ribosomal subunit. Contacts protein S5. The interaction surface between S4 and S5 is involved in control of translational fidelity.

In terms of biological role, one of the primary rRNA binding proteins, it binds directly to 16S rRNA where it nucleates assembly of the body of the 30S subunit. Its function is as follows. With S5 and S12 plays an important role in translational accuracy. This is Small ribosomal subunit protein uS4 from Prochlorococcus marinus (strain MIT 9312).